The following is a 94-amino-acid chain: 2S albumin-like cysteine protease inhibitor (94 aa).

Cystine bridges form between Cys-12–Cys-35, Cys-36–Cys-82, and Cys-48–Cys-89.

This sequence belongs to the 2S seed storage albumins family. In terms of tissue distribution, expressed in seeds (at protein level).

Cysteine protease inhibitor that likely functions in defense against insects by inhibiting cysteine proteases in the midgut of herbivore insects such as C.maculatus. Selectively inhibits cathepsin L, as well as papain, ficin and bromelain with lower efficiency. Shows antitumor activity, inhibiting the growth of prostate cancer cell lines PC3 and DU145, and the gastric cancer cell line Hs746T. No activity against cathepsin B or serine proteases (trypsin, human plasma kallikrein and elastase). This chain is 2S albumin-like cysteine protease inhibitor, found in Araucaria angustifolia (Brazilian pine tree).